The following is a 280-amino-acid chain: MGLKKFKPITPGLRHLILPDFSEITKEEPEKSLLRPLKKSGGRNNFGHVTTRFRGGGHKRLYRIIDFRRDKDNIPAKVASIEYDPNRTARIALLHYADGEKRYIIAPEGLKVGDIVMSGENVDIKVGNNLPLKNIPDGTLIHNLELYPGRGGQLVRAAGTAAQILGKEGKWAYVRLPSGEIRLFDLNCRATIGQVSNVDHQNVSLGKAGRSRWLGRRPHVRGSAMNAVDHPHGGGEGKAPIGHPSPLTPWGKPTLGYKTRKKRKPSDRFIIQRANDKKEK.

The segment at 229 to 280 (DHPHGGGEGKAPIGHPSPLTPWGKPTLGYKTRKKRKPSDRFIIQRANDKKEK) is disordered.

The protein belongs to the universal ribosomal protein uL2 family. As to quaternary structure, part of the 50S ribosomal subunit. Forms a bridge to the 30S subunit in the 70S ribosome.

One of the primary rRNA binding proteins. Required for association of the 30S and 50S subunits to form the 70S ribosome, for tRNA binding and peptide bond formation. It has been suggested to have peptidyltransferase activity; this is somewhat controversial. Makes several contacts with the 16S rRNA in the 70S ribosome. This Dictyoglomus turgidum (strain DSM 6724 / Z-1310) protein is Large ribosomal subunit protein uL2.